Reading from the N-terminus, the 413-residue chain is Aspartate aminotransferase, cytoplasmic (413 aa).

G39 and W141 together coordinate L-aspartate. S149 carries the phosphoserine modification. Residue N195 participates in L-aspartate binding. Residue K259 is modified to N6-(pyridoxal phosphate)lysine. R387 is an L-aspartate binding site.

The protein belongs to the class-I pyridoxal-phosphate-dependent aminotransferase family. Homodimer. The cofactor is pyridoxal 5'-phosphate.

The protein resides in the cytoplasm. It carries out the reaction L-aspartate + 2-oxoglutarate = oxaloacetate + L-glutamate. The catalysed reaction is L-cysteine + 2-oxoglutarate = 2-oxo-3-sulfanylpropanoate + L-glutamate. It catalyses the reaction (2S)-2-aminobutanoate + 2-oxoglutarate = 2-oxobutanoate + L-glutamate. The enzyme catalyses 3-sulfino-L-alanine + 2-oxoglutarate = 3-sulfinopyruvate + L-glutamate. Functionally, biosynthesis of L-glutamate from L-aspartate or L-cysteine. Important regulator of levels of glutamate, the major excitatory neurotransmitter of the vertebrate central nervous system. Acts as a scavenger of glutamate in brain neuroprotection. The aspartate aminotransferase activity is involved in hepatic glucose synthesis during development and in adipocyte glyceroneogenesis. Using L-cysteine as substrate, regulates levels of mercaptopyruvate, an important source of hydrogen sulfide. Mercaptopyruvate is converted into H(2)S via the action of 3-mercaptopyruvate sulfurtransferase (3MST). Hydrogen sulfide is an important synaptic modulator and neuroprotectant in the brain. This Macaca fascicularis (Crab-eating macaque) protein is Aspartate aminotransferase, cytoplasmic.